Consider the following 1406-residue polypeptide: DNA-directed RNA polymerase subunit beta' (1406 aa).

Zn(2+) contacts are provided by cysteine 72, cysteine 74, cysteine 87, and cysteine 90. Mg(2+) contacts are provided by aspartate 462, aspartate 464, and aspartate 466. Zn(2+)-binding residues include cysteine 816, cysteine 889, cysteine 896, and cysteine 899.

Belongs to the RNA polymerase beta' chain family. In terms of assembly, the RNAP catalytic core consists of 2 alpha, 1 beta, 1 beta' and 1 omega subunit. When a sigma factor is associated with the core the holoenzyme is formed, which can initiate transcription. Mg(2+) serves as cofactor. It depends on Zn(2+) as a cofactor.

It catalyses the reaction RNA(n) + a ribonucleoside 5'-triphosphate = RNA(n+1) + diphosphate. In terms of biological role, DNA-dependent RNA polymerase catalyzes the transcription of DNA into RNA using the four ribonucleoside triphosphates as substrates. The protein is DNA-directed RNA polymerase subunit beta' of Psychrobacter sp. (strain PRwf-1).